The following is a 256-amino-acid chain: MFDWTGKNVVYVGSFSGIGWQMMMQLMQKDIKMMGIMHRMENVEMMKKLQAINPSVKVVFMQMNLMEKMSIEQAMKKMGQMMGHIDVMINGEGVLLDKDVETTMGMNLTGMIQSTMMAMPYMDKTQMGMGGMVVNMSSVYGLEPAPAFAVYAAAMHGILGFTRSMGDKMIYQKTGVMFMAMCPGLTNSEMIMNLRDNVTWHHSESMVEAIESAKRQMPEEAAMQMIHAMEMMKNGSMWIVSMGQLKEVTPTMHWQM.

10-34 (VYVGSFSGIGWQMMMQLMQKDIKMM) is a binding site for NAD(+). Residue serine 138 participates in substrate binding. The Proton acceptor role is filled by tyrosine 151.

It belongs to the short-chain dehydrogenases/reductases (SDR) family.

This Drosophila melanogaster (Fruit fly) protein is Fat body protein 2 (Fbp2).